A 461-amino-acid chain; its full sequence is Homocitrate synthase (461 aa).

The Pyruvate carboxyltransferase domain occupies 4-259; the sequence is VGILDSTLRE…IEVVKLDKLQ (256 aa). A 2-oxoglutarate-binding site is contributed by Arg12. Glu13 is a binding site for Mg(2+). 2-oxoglutarate is bound by residues His76, Arg136, and Thr170. 2 residues coordinate Mg(2+): His198 and His200. Residue His292 is the Proton acceptor of the active site.

This sequence belongs to the alpha-IPM synthase/homocitrate synthase family. Homocitrate synthase LYS20/LYS21 subfamily. It depends on Mg(2+) as a cofactor. Requires Mn(2+) as cofactor.

The catalysed reaction is acetyl-CoA + 2-oxoglutarate + H2O = (2R)-homocitrate + CoA + H(+). Its pathway is amino-acid biosynthesis; L-lysine biosynthesis via AAA pathway; L-alpha-aminoadipate from 2-oxoglutarate: step 1/5. Its function is as follows. Catalyzes the aldol-type condensation of 2-oxoglutarate with acetyl-CoA to yield homocitrate. Carries out the first step of the alpha-aminoadipate (AAA) lysine biosynthesis pathway. This Saccharolobus solfataricus (strain ATCC 35092 / DSM 1617 / JCM 11322 / P2) (Sulfolobus solfataricus) protein is Homocitrate synthase.